Consider the following 216-residue polypeptide: Protein-L-isoaspartate O-methyltransferase (216 aa).

The active site involves S61.

This sequence belongs to the methyltransferase superfamily. L-isoaspartyl/D-aspartyl protein methyltransferase family.

The protein localises to the cytoplasm. It catalyses the reaction [protein]-L-isoaspartate + S-adenosyl-L-methionine = [protein]-L-isoaspartate alpha-methyl ester + S-adenosyl-L-homocysteine. Catalyzes the methyl esterification of L-isoaspartyl residues in peptides and proteins that result from spontaneous decomposition of normal L-aspartyl and L-asparaginyl residues. It plays a role in the repair and/or degradation of damaged proteins. This Geobacter metallireducens (strain ATCC 53774 / DSM 7210 / GS-15) protein is Protein-L-isoaspartate O-methyltransferase.